We begin with the raw amino-acid sequence, 352 residues long: MATMSSISKIIFLATCLIIHMGLSSADFYTVGYSQDDLTSIERLIQLFDSWMLKHNKIYESIDEKIYRFEIFRDNLMYIDETNKKNNSYWLGLNGFADLSNDEFKKKYVGFVAEDFTGLEHFDNEDFTYKHVTNYPQSIDWRAKGAVTPVKNQGACGSCWAFSTIATVEGINKIVTGNLLELSEQELVDCDKHSYGCKGGYQTTSLQYVANNGVHTSKVYPYQAKQYKCRATDKPGPKVKITGYKRVPSNCETSFLGALANQPLSVLVEAGGKPFQLYKSGVFDGPCGTKLDHAVTAVGYGTSDGKNYIIIKNSWGPNWGEKGYMRLKRQSGNSQGTCGVYKSSYYPFKGFA.

A signal peptide spans 1-18; that stretch reads MATMSSISKIIFLATCLI. A propeptide spans 19-134 (activation peptide); sequence IHMGLSSADF…EDFTYKHVTN (116 aa). N-linked (GlcNAc...) asparagine glycosylation occurs at N86. 3 cysteine pairs are disulfide-bonded: C156-C197, C190-C229, and C287-C338. The active site involves C159. Residues H293 and N313 contribute to the active site.

Belongs to the peptidase C1 family.

It catalyses the reaction Specificity similar to that of papain.. Cysteine proteinase with a high level of diversity in substrate specificity. This chain is Chymopapain, found in Carica papaya (Papaya).